A 151-amino-acid chain; its full sequence is Chaperonin GroEL (151 aa).

41–45 (DGTTT) contacts ATP.

It belongs to the chaperonin (HSP60) family. As to quaternary structure, forms a cylinder of 14 subunits composed of two heptameric rings stacked back-to-back. Interacts with the co-chaperonin GroES.

It is found in the cytoplasm. It catalyses the reaction ATP + H2O + a folded polypeptide = ADP + phosphate + an unfolded polypeptide.. In terms of biological role, together with its co-chaperonin GroES, plays an essential role in assisting protein folding. The GroEL-GroES system forms a nano-cage that allows encapsulation of the non-native substrate proteins and provides a physical environment optimized to promote and accelerate protein folding. The chain is Chaperonin GroEL from Mycobacterium marinum.